The sequence spans 187 residues: Threonylcarbamoyl-AMP synthase (187 aa).

The YrdC-like domain maps to 4-187 (TPDLDAAVAT…DARTGQILRD (184 aa)).

The protein belongs to the SUA5 family. TsaC subfamily.

The protein localises to the cytoplasm. It catalyses the reaction L-threonine + hydrogencarbonate + ATP = L-threonylcarbamoyladenylate + diphosphate + H2O. In terms of biological role, required for the formation of a threonylcarbamoyl group on adenosine at position 37 (t(6)A37) in tRNAs that read codons beginning with adenine. Catalyzes the conversion of L-threonine, HCO(3)(-)/CO(2) and ATP to give threonylcarbamoyl-AMP (TC-AMP) as the acyladenylate intermediate, with the release of diphosphate. This is Threonylcarbamoyl-AMP synthase from Xanthomonas campestris pv. campestris (strain 8004).